The chain runs to 328 residues: Malate dehydrogenase (328 aa).

12 to 18 (GAAGQIA) is an NAD(+) binding site. The substrate site is built by Arg93 and Arg99. Residues Asn106, Gln113, and 130–132 (VGN) contribute to the NAD(+) site. The substrate site is built by Asn132 and Arg163. The active-site Proton acceptor is His188.

It belongs to the LDH/MDH superfamily. MDH type 2 family.

The enzyme catalyses (S)-malate + NAD(+) = oxaloacetate + NADH + H(+). Catalyzes the reversible oxidation of malate to oxaloacetate. The chain is Malate dehydrogenase from Burkholderia cenocepacia (strain ATCC BAA-245 / DSM 16553 / LMG 16656 / NCTC 13227 / J2315 / CF5610) (Burkholderia cepacia (strain J2315)).